The following is an 82-amino-acid chain: Small ribosomal subunit protein bS16 (82 aa).

Belongs to the bacterial ribosomal protein bS16 family.

This chain is Small ribosomal subunit protein bS16, found in Shewanella sp. (strain ANA-3).